The sequence spans 226 residues: Late protein I226R (226 aa).

Residues 1–16 form the signal peptide; the sequence is MKMETFLVCLFHNADG. Residues Asn142 and Asn164 are each glycosylated (N-linked (GlcNAc...) asparagine; by host).

It belongs to the asfivirus I226R family.

Functionally, plays a role in the inhibition of host NF-kappa-B and IRF3 signaling pathways. Mechanistically, promotes the degradation of host IKBKG through enhancing its ubiquitination leading to inhibition of both pathways. The polypeptide is Late protein I226R (Ornithodoros (relapsing fever ticks)).